Here is a 254-residue protein sequence, read N- to C-terminus: 3-dehydroquinate dehydratase (254 aa).

3-dehydroquinate is bound by residues 47-49 and R83; that span reads EFR. H144 acts as the Proton donor/acceptor in catalysis. The Schiff-base intermediate with substrate role is filled by K171. The 3-dehydroquinate site is built by R213, S232, and Q236.

It belongs to the type-I 3-dehydroquinase family. In terms of assembly, homodimer.

The enzyme catalyses 3-dehydroquinate = 3-dehydroshikimate + H2O. Its pathway is metabolic intermediate biosynthesis; chorismate biosynthesis; chorismate from D-erythrose 4-phosphate and phosphoenolpyruvate: step 3/7. In terms of biological role, involved in the third step of the chorismate pathway, which leads to the biosynthesis of aromatic amino acids. Catalyzes the cis-dehydration of 3-dehydroquinate (DHQ) and introduces the first double bond of the aromatic ring to yield 3-dehydroshikimate. The chain is 3-dehydroquinate dehydratase from Neisseria gonorrhoeae (strain ATCC 700825 / FA 1090).